Here is a 200-residue protein sequence, read N- to C-terminus: Adenylate kinase (200 aa).

10–15 lines the ATP pocket; that stretch reads GAGKGT. An NMP region spans residues 30 to 59; the sequence is STGDMLRAAVAAETPVGLEAKAIMESGGLV. AMP is bound by residues T31, R36, 57–59, 85–88, and Q92; these read GLV and GFPR. Residues 126 to 142 are LID; sequence KRAEETAARGQPVRKDD. R127 is a binding site for ATP. AMP contacts are provided by R139 and R150. Residue K178 participates in ATP binding.

This sequence belongs to the adenylate kinase family. Monomer.

It is found in the cytoplasm. The catalysed reaction is AMP + ATP = 2 ADP. The protein operates within purine metabolism; AMP biosynthesis via salvage pathway; AMP from ADP: step 1/1. Its function is as follows. Catalyzes the reversible transfer of the terminal phosphate group between ATP and AMP. Plays an important role in cellular energy homeostasis and in adenine nucleotide metabolism. The chain is Adenylate kinase from Methylorubrum extorquens (strain CM4 / NCIMB 13688) (Methylobacterium extorquens).